Here is a 372-residue protein sequence, read N- to C-terminus: GTPase Obg (372 aa).

The Obg domain maps to 1–159 (MAFVDEAKFF…KWLLIELKLM (159 aa)). Residues 121–141 (GSGGMGNPHFSSGSNRTPRVA) are disordered. In terms of domain architecture, OBG-type G spans 160-329 (ADVGLVGLPN…LVKLIGDIID (170 aa)). GTP contacts are provided by residues 166–173 (GLPNAGKS), 191–195 (FTTLE), 213–216 (DIPG), 280–283 (NKCD), and 310–312 (SAI). Mg(2+) is bound by residues S173 and T193. The interval 346–372 (QDLKKQKEEERRQELKKQKEEEQAKDE) is disordered.

Belongs to the TRAFAC class OBG-HflX-like GTPase superfamily. OBG GTPase family. Monomer. It depends on Mg(2+) as a cofactor.

It localises to the cytoplasm. Its function is as follows. An essential GTPase which binds GTP, GDP and possibly (p)ppGpp with moderate affinity, with high nucleotide exchange rates and a fairly low GTP hydrolysis rate. Plays a role in control of the cell cycle, stress response, ribosome biogenesis and in those bacteria that undergo differentiation, in morphogenesis control. The chain is GTPase Obg from Desulfotalea psychrophila (strain LSv54 / DSM 12343).